The primary structure comprises 119 residues: MPRVKRGVTARARHKKVIAAAKGYRGRRGNVFRIAKQAVMRAGQYAYRDRRNKKRTFRALWITRINAAVREQGMSYSVFIAGLKKAAIELDRKVLADLAVRDKAGFAAIVQQAKAALAA.

Belongs to the bacterial ribosomal protein bL20 family.

In terms of biological role, binds directly to 23S ribosomal RNA and is necessary for the in vitro assembly process of the 50S ribosomal subunit. It is not involved in the protein synthesizing functions of that subunit. This chain is Large ribosomal subunit protein bL20, found in Bordetella bronchiseptica (strain ATCC BAA-588 / NCTC 13252 / RB50) (Alcaligenes bronchisepticus).